An 823-amino-acid polypeptide reads, in one-letter code: Trimethylamine-N-oxide reductase (823 aa).

Residues 1–32 constitute a signal peptide (tat-type signal); that stretch reads MKQSRRQFLKNMSAMAATFAMPNFLIAQNAFA. Serine 181 lines the Mo-bis(molybdopterin guanine dinucleotide) pocket.

It belongs to the prokaryotic molybdopterin-containing oxidoreductase family. Mo-bis(molybdopterin guanine dinucleotide) serves as cofactor. Post-translationally, predicted to be exported by the Tat system. The position of the signal peptide cleavage has not been experimentally proven.

Its subcellular location is the periplasm. It catalyses the reaction trimethylamine + 2 Fe(III)-[cytochrome c] + H2O = trimethylamine N-oxide + 2 Fe(II)-[cytochrome c] + 3 H(+). In terms of biological role, reduces trimethylamine-N-oxide (TMAO) into trimethylamine; an anaerobic reaction coupled to energy-yielding reactions. In Pasteurella multocida (strain Pm70), this protein is Trimethylamine-N-oxide reductase (torA).